A 191-amino-acid chain; its full sequence is Fe/S biogenesis protein NfuA (191 aa).

[4Fe-4S] cluster contacts are provided by Cys-149 and Cys-152.

This sequence belongs to the NfuA family. As to quaternary structure, homodimer. It depends on [4Fe-4S] cluster as a cofactor.

Its function is as follows. Involved in iron-sulfur cluster biogenesis. Binds a 4Fe-4S cluster, can transfer this cluster to apoproteins, and thereby intervenes in the maturation of Fe/S proteins. Could also act as a scaffold/chaperone for damaged Fe/S proteins. This is Fe/S biogenesis protein NfuA from Sodalis glossinidius (strain morsitans).